Consider the following 459-residue polypeptide: Argininosuccinate lyase (459 aa).

Belongs to the lyase 1 family. Argininosuccinate lyase subfamily.

It localises to the cytoplasm. The catalysed reaction is 2-(N(omega)-L-arginino)succinate = fumarate + L-arginine. Its pathway is amino-acid biosynthesis; L-arginine biosynthesis; L-arginine from L-ornithine and carbamoyl phosphate: step 3/3. The protein is Argininosuccinate lyase of Prochlorococcus marinus (strain MIT 9301).